Reading from the N-terminus, the 369-residue chain is Leucine-specific-binding protein (369 aa).

Residues 1-23 (MKRKAKTIIAGIVALAVSQGAMA) form the signal peptide. A disulfide bridge links C76 with C101.

The protein belongs to the leucine-binding protein family.

It is found in the periplasm. Its function is as follows. This protein is a component of the leucine-specific transport system, which is one of the two periplasmic binding protein-dependent transport systems of the high-affinity transport of the branched-chain amino acids. This chain is Leucine-specific-binding protein (livK), found in Salmonella typhi.